The primary structure comprises 174 residues: Methylated-DNA--protein-cysteine methyltransferase (174 aa).

Residue cysteine 141 is the Nucleophile; methyl group acceptor of the active site.

The protein belongs to the MGMT family.

It is found in the cytoplasm. It catalyses the reaction a 6-O-methyl-2'-deoxyguanosine in DNA + L-cysteinyl-[protein] = S-methyl-L-cysteinyl-[protein] + a 2'-deoxyguanosine in DNA. It carries out the reaction a 4-O-methyl-thymidine in DNA + L-cysteinyl-[protein] = a thymidine in DNA + S-methyl-L-cysteinyl-[protein]. Functionally, involved in the cellular defense against the biological effects of O6-methylguanine (O6-MeG) and O4-methylthymine (O4-MeT) in DNA. Repairs the methylated nucleobase in DNA by stoichiometrically transferring the methyl group to a cysteine residue in the enzyme. This is a suicide reaction: the enzyme is irreversibly inactivated. This is Methylated-DNA--protein-cysteine methyltransferase from Thermococcus gammatolerans (strain DSM 15229 / JCM 11827 / EJ3).